Here is a 157-residue protein sequence, read N- to C-terminus: Arginine regulator (157 aa).

This sequence belongs to the ArgR family.

It localises to the cytoplasm. It functions in the pathway amino-acid degradation; L-arginine degradation via ADI pathway. Regulates the transcription of the arc operon, involved in arginine catabolism. In Streptococcus pyogenes serotype M3 (strain SSI-1), this protein is Arginine regulator (argR1).